The following is a 182-amino-acid chain: MIFDEFSIKTLIRPVPDFPRPGVIFRDITPLFQSPKALRMVADSFIQRYVEADFTHIGALDARGFLVGSILAYELNKPLVLFRKQGKLPADVLSQAYCTEYGEAHLEIHADSLCEGDSVLLFDDLIATGGTLLAAAQLVRRMRASIHEAAAIIDLPELGGSQKLQDIGIPTFTLTAFELSDR.

It belongs to the purine/pyrimidine phosphoribosyltransferase family. In terms of assembly, homodimer.

It is found in the cytoplasm. It catalyses the reaction AMP + diphosphate = 5-phospho-alpha-D-ribose 1-diphosphate + adenine. It participates in purine metabolism; AMP biosynthesis via salvage pathway; AMP from adenine: step 1/1. In terms of biological role, catalyzes a salvage reaction resulting in the formation of AMP, that is energically less costly than de novo synthesis. The sequence is that of Adenine phosphoribosyltransferase from Stutzerimonas stutzeri (strain A1501) (Pseudomonas stutzeri).